Reading from the N-terminus, the 357-residue chain is Protein ATP1B4 (357 aa).

At 1-110 (MRRQLRSRRA…FLARTGQSWS (110 aa)) the chain is on the nuclear side. The tract at residues 15 to 80 (YSYRYRLDDP…EEGQGQPTGN (66 aa)) is disordered. Over residues 52–73 (EEEEEEEEKEEEEEEEKEEEEG) the composition is skewed to acidic residues. Residues 111–131 (LILLIYFFFYASLAAVITLCM) form a helical; Signal-anchor for type II membrane protein membrane-spanning segment. Residues 132–357 (YTLFLTISPY…RVIFTLNIET (226 aa)) are Perinuclear space-facing.

The protein belongs to the X(+)/potassium ATPases subunit beta family. In terms of assembly, associates with a SMAD7-transcriptional complex. Interacts with SNW1 and TOR1AIP1. According to PubMed:17592128, does not associate with known Na,K-ATPase alpha-subunits. As to expression, highly expressed in skeletal muscle and at a lower level in heart.

The protein resides in the nucleus inner membrane. Its function is as follows. May act as a transcriptional coregulator during muscle development through its interaction with SNW1. Has lost its ancestral function as a Na,K-ATPase beta-subunit. In Homo sapiens (Human), this protein is Protein ATP1B4 (ATP1B4).